A 2217-amino-acid chain; its full sequence is DNA polymerase epsilon catalytic subunit A (2217 aa).

C2104, C2107, C2126, and C2129 together coordinate Zn(2+). The CysA-type zinc-finger motif lies at 2104 to 2129; the sequence is CEYCSYVSDLDLCRDGLDGKFQCPRC. Residues C2160, C2163, C2175, and C2177 each coordinate [4Fe-4S] cluster. A CysB motif motif is present at residues 2160–2177; it reads CEKCHTVKRDLMSTNCNC.

This sequence belongs to the DNA polymerase type-B family. As to quaternary structure, heterotetramer. Consists of 4 subunits: POL2, DPB2, DPB3 and DPB4. It depends on [4Fe-4S] cluster as a cofactor.

It is found in the nucleus. It carries out the reaction DNA(n) + a 2'-deoxyribonucleoside 5'-triphosphate = DNA(n+1) + diphosphate. In terms of biological role, DNA polymerase II participates in chromosomal DNA replication. In Candida glabrata (strain ATCC 2001 / BCRC 20586 / JCM 3761 / NBRC 0622 / NRRL Y-65 / CBS 138) (Yeast), this protein is DNA polymerase epsilon catalytic subunit A (POL2).